Here is a 552-residue protein sequence, read N- to C-terminus: Urocanate hydratase (552 aa).

Residues 49-50, Gln127, 173-175, Asp193, 239-240, 260-264, 270-271, and Tyr319 each bind NAD(+); these read GG, GMG, NA, QTSAH, and YI. The active site involves Cys407. Gly489 is an NAD(+) binding site.

The protein belongs to the urocanase family. The cofactor is NAD(+).

Its subcellular location is the cytoplasm. It catalyses the reaction 4-imidazolone-5-propanoate = trans-urocanate + H2O. It participates in amino-acid degradation; L-histidine degradation into L-glutamate; N-formimidoyl-L-glutamate from L-histidine: step 2/3. In terms of biological role, catalyzes the conversion of urocanate to 4-imidazolone-5-propionate. The sequence is that of Urocanate hydratase from Bacillus cereus (strain AH187).